The primary structure comprises 158 residues: MIRIGHGFDVHAFGGEGPIIIGGVAIPYEKGLLAHSDGDVALHALTDALLGAVALGDIGKLFPDTDMQYKGADSRGLLREAYTQVQAKGYKVGNVDVTIIAQAPKMRPHIDAMRAAIAEDLACDIEQVNVKATTSERLGFTGRGEGIACEAVALVVKS.

The a divalent metal cation site is built by Asp9 and His11. Residues 9–11 (DVH) and 35–36 (HS) each bind 4-CDP-2-C-methyl-D-erythritol 2-phosphate. His43 serves as a coordination point for a divalent metal cation. Residues 57–59 (DIG), 62–66 (FPDTD), 133–136 (TTSE), Phe140, and Arg143 each bind 4-CDP-2-C-methyl-D-erythritol 2-phosphate.

Belongs to the IspF family. Homotrimer. It depends on a divalent metal cation as a cofactor.

It catalyses the reaction 4-CDP-2-C-methyl-D-erythritol 2-phosphate = 2-C-methyl-D-erythritol 2,4-cyclic diphosphate + CMP. It functions in the pathway isoprenoid biosynthesis; isopentenyl diphosphate biosynthesis via DXP pathway; isopentenyl diphosphate from 1-deoxy-D-xylulose 5-phosphate: step 4/6. Functionally, involved in the biosynthesis of isopentenyl diphosphate (IPP) and dimethylallyl diphosphate (DMAPP), two major building blocks of isoprenoid compounds. Catalyzes the conversion of 4-diphosphocytidyl-2-C-methyl-D-erythritol 2-phosphate (CDP-ME2P) to 2-C-methyl-D-erythritol 2,4-cyclodiphosphate (ME-CPP) with a corresponding release of cytidine 5-monophosphate (CMP). This is 2-C-methyl-D-erythritol 2,4-cyclodiphosphate synthase from Pasteurella multocida (strain Pm70).